Reading from the N-terminus, the 165-residue chain is Nucleotide-binding protein CHY_1197 (165 aa).

The protein belongs to the YajQ family.

Its function is as follows. Nucleotide-binding protein. This chain is Nucleotide-binding protein CHY_1197, found in Carboxydothermus hydrogenoformans (strain ATCC BAA-161 / DSM 6008 / Z-2901).